Here is a 560-residue protein sequence, read N- to C-terminus: Factor VII-activating protease (560 aa).

A signal peptide spans 1-23; it reads MFARMSDLHVLLLMALVGKTACG. N-linked (GlcNAc...) asparagine glycosylation occurs at Asn54. 3 consecutive EGF-like domains span residues 73 to 109, 111 to 148, and 150 to 188; these read QADP…NKCQ, VQNT…PSCS, and VVPV…KFCE. Cystine bridges form between Cys77–Cys88, Cys82–Cys97, Cys99–Cys108, Cys115–Cys125, Cys120–Cys136, Cys138–Cys147, Cys154–Cys165, Cys159–Cys176, Cys178–Cys187, Cys194–Cys276, Cys215–Cys257, Cys246–Cys271, Cys301–Cys435, Cys347–Cys363, Cys355–Cys424, Cys447–Cys515, Cys477–Cys493, and Cys505–Cys533. The region spanning 193–276 is the Kringle domain; it reads DCYVGDGYSY…KWEYCDVSAC (84 aa). Residue Asn207 is glycosylated (N-linked (GlcNAc...) asparagine). Positions 314–555 constitute a Peptidase S1 domain; sequence IYGGFKSTAG…FLNWIKATIK (242 aa). Active-site charge relay system residues include His362 and Asp411. Ser509 (charge relay system) is an active-site residue.

The protein belongs to the peptidase S1 family. Heterodimer; disulfide-linked. Heterodimer of a 50 kDa heavy and a 27 kDa light chain linked by a disulfide bond. In terms of processing, proteolytic cleavage at Gly-23 or Met-27 can give rise to the 50 kDa heavy chain (HC) and cleavage at Arg-313 or Lys-319 can give rise to the 27 kDa light chain (LC). The HC can undergo further proteolytic cleavage giving rise to a 26 kDa fragment. The LC can undergo further proteolytic cleavage at Arg-313 leading to a 17-kDa fragment and at Arg-480 leading to a 8-kDa fragment. Ubiquitously expressed.

It localises to the secreted. Functionally, cleaves the alpha-chain at multiple sites and the beta-chain between 'Lys-53' and 'Lys-54' but not the gamma-chain of fibrinogen and therefore does not initiate the formation of the fibrin clot and does not cause the fibrinolysis directly. It does not cleave (activate) prothrombin and plasminogen but converts the inactive single chain urinary plasminogen activator (pro-urokinase) to the active two chain form. Activates coagulation factor VII. May function as a tumor suppressor negatively regulating cell proliferation and cell migration. This is Factor VII-activating protease from Homo sapiens (Human).